Consider the following 294-residue polypeptide: sn-glycerol-3-phosphate transport system permease protein UgpA (294 aa).

Residues 1 to 11 lie on the Cytoplasmic side of the membrane; that stretch reads MSPSRPGFSCS. The helical transmembrane segment at 12–32 threads the bilayer; the sequence is WLPYLLVLPQLAITAIFFLWP. Residues 33-80 are Periplasmic-facing; that stretch reads AGEALWYSVQTLDPFGLSSEFVGLSNFIQLFQDEYYLASFYTTLIFSA. The ABC transmembrane type-1 domain maps to 72-284; sequence FYTTLIFSAL…LLVIGLTVIQ (213 aa). The chain crosses the membrane as a helical span at residues 81–101; the sequence is LVAGIGLNVSLFLAAMVDYVL. The Cytoplasmic segment spans residues 102-109; sequence RGSRLYQT. Residues 110–130 form a helical membrane-spanning segment; that stretch reads LLILPYAVAPAVAAVLWIFLF. The Periplasmic portion of the chain corresponds to 131–157; the sequence is DPGLGLITHALAKLGYSWNHAQNSGQA. The chain crosses the membrane as a helical span at residues 158-178; it reads MFLVVLASVWKQISYNFLFFL. Residues 179–207 are Cytoplasmic-facing; sequence AALQSIPKSLVEAAAIDGAGPVRRFFNLV. The chain crosses the membrane as a helical span at residues 208 to 228; it reads LPLISPVSFFLLVVNLVYAFF. Residues 229-262 are Periplasmic-facing; sequence DTFPVIDAATGGGPVQATTTLIYKIYREGFAGLD. A helical transmembrane segment spans residues 263–283; it reads LSSSAAQSVILMLLVIGLTVI. Topologically, residues 284–294 are cytoplasmic; the sequence is QFRFVERKVRY.

This sequence belongs to the binding-protein-dependent transport system permease family. UgpAE subfamily. As to quaternary structure, the complex is composed of two ATP-binding proteins (UgpC), two transmembrane proteins (UgpA and UgpE) and a solute-binding protein (UgpB).

The protein localises to the cell inner membrane. Its function is as follows. Part of the ABC transporter complex UgpBAEC involved in sn-glycerol-3-phosphate (G3P) import. Probably responsible for the translocation of the substrate across the membrane. The sequence is that of sn-glycerol-3-phosphate transport system permease protein UgpA (ugpA) from Yersinia pseudotuberculosis serotype I (strain IP32953).